A 654-amino-acid polypeptide reads, in one-letter code: Fructose-1,6-bisphosphatase class 3 (654 aa).

Residues 288–307 (NPAFKPKKRPDKHERLTQRE) are disordered. The span at 298–307 (DKHERLTQRE) shows a compositional bias: basic and acidic residues.

This sequence belongs to the FBPase class 3 family. Requires Mn(2+) as cofactor.

The enzyme catalyses beta-D-fructose 1,6-bisphosphate + H2O = beta-D-fructose 6-phosphate + phosphate. It participates in carbohydrate biosynthesis; gluconeogenesis. The sequence is that of Fructose-1,6-bisphosphatase class 3 from Staphylococcus aureus (strain bovine RF122 / ET3-1).